The following is a 224-amino-acid chain: Ribonuclease HII (224 aa).

In terms of domain architecture, RNase H type-2 spans phenylalanine 33–serine 224. Residues aspartate 39, glutamate 40, and aspartate 131 each contribute to the a divalent metal cation site.

The protein belongs to the RNase HII family. Requires Mn(2+) as cofactor. It depends on Mg(2+) as a cofactor.

Its subcellular location is the cytoplasm. It carries out the reaction Endonucleolytic cleavage to 5'-phosphomonoester.. Endonuclease that specifically degrades the RNA of RNA-DNA hybrids. The polypeptide is Ribonuclease HII (Bartonella tribocorum (strain CIP 105476 / IBS 506)).